The sequence spans 849 residues: MNPINSLAFDLHSVKLADANSDTAALSNSNTPTMNNAALLQRPSSIMDSIGVQRVPSPFVPGSNAISGASTVPFNAYDAEITGSPLQISANQENNSAFSAASSNLHMNASSPSVLNKPSSTFPNVAPYLYNATGPAPNVGNQPPPPGIESQWKYIDSNGNIQGPFGTNNMSQWYQGGYFTPTLQICRLATSPEPFGVNDRFIRLGELTTLVNNYQDPFVAFDFIVIRALNAVPLVAPTSSEKQKVESRDLIPVADVHSDDFTYEEILGLKFEDGSYYHETQVWVPVDGRHITKVDRIPKISAYTAPLSTTSSRSNKTTSSHEEKVPSHEEASPEEQEVFSEEGRTVSNITNEEESIVKNPTKQEEESRGSEKEQNILDQVQPEIEEVDRKDVISTADEPKSKDTPQMTSEEQKRFAKAELMAQKLLEEQQRQEEEKKRREEQRKLKKEKKLKQKQKKEEEKLKKKKKEEGKLEKEKQKELLNNILTGDTETPSSENTATSITTNLAPWANKKPEGAVYNQISSALEDLKKENSSKKEKKPNRTQLDREQALKLQKEILSSAQIPKTQTGSAWGIKPQQPIKVDIKGELMKDSTKINSQSKINKANNGDIKPDSTFIEEQKKLWEQVQKKTKKFNRASSLDDFISRTPSPSSSALNSSNTSNAWTTVSSKSTTHIASTMPVAGNQSKSYISLDTLRSSGGLSTATKTKMSDKSKQIGSSTSIPTLKARQVKPSRIPAYPGNASVSKRQEFLRWCRSQLKLNTGVQPDNVLEMLLSLPPGSESKEIIADTIYSYSSTMDGRRFATDFIKKRLECEEEINDPLSWSEVLAMPEGSSEDWEFQVVGKKKGKRF.

Residues 149 to 205 (ESQWKYIDSNGNIQGPFGTNNMSQWYQGGYFTPTLQICRLATSPEPFGVNDRFIRLG) enclose the GYF domain. 4 disordered regions span residues 305–505 (APLS…TTNL), 527–547 (DLKK…QLDR), 593–612 (TKIN…IKPD), and 634–661 (NRAS…NTSN). The segment covering 308-318 (STTSSRSNKTT) has biased composition (low complexity). Over residues 319–331 (SSHEEKVPSHEEA) the composition is skewed to basic and acidic residues. Thr-350 carries the post-translational modification Phosphothreonine. Composition is skewed to basic and acidic residues over residues 361-375 (TKQE…KEQN), 387-403 (VDRK…KSKD), and 425-443 (LLEE…EEQR). The stretch at 410–484 (EEQKRFAKAE…EKQKELLNNI (75 aa)) forms a coiled coil. A compositionally biased stretch (basic residues) spans 444–455 (KLKKEKKLKQKQ). Residues 456-479 (KKEEEKLKKKKKEEGKLEKEKQKE) are compositionally biased toward basic and acidic residues. Over residues 483–505 (NILTGDTETPSSENTATSITTNL) the composition is skewed to polar residues. Residues 594-605 (KINSQSKINKAN) show a composition bias toward polar residues. Residues 644 to 661 (SRTPSPSSSALNSSNTSN) are compositionally biased toward low complexity.

Belongs to the SMY2/mpd2 family. As to quaternary structure, interacts with ribosomes. Interacts with EAP1 and MSL5 (via the GYP domain).

The protein localises to the cytoplasm. This is SMY2 homolog 2 (SYH1) from Saccharomyces cerevisiae (strain ATCC 204508 / S288c) (Baker's yeast).